The following is a 233-amino-acid chain: Bcl-2-like protein 1 (233 aa).

The BH4 signature appears at 4–24 (SNRELVVDFLSYKLSQKGYSW). The segment at 27–73 (FSDVEENRTEAPEETEPERETPSAINGNPSWHLADSPAVNGATGHSS) is disordered. Residue S49 is modified to Phosphoserine; by PLK3. S62 carries the post-translational modification Phosphoserine; by CDK1. Residues 86–100 (VKQALREAGDEFELR) carry the BH3 motif. A BH1 motif is present at residues 129–148 (ELFRDGVNWGRIVAFFSFGG). The BH2 signature appears at 180–195 (PWIQENGGWDTFVDLY). A helical transmembrane segment spans residues 210 to 226 (FNRWFLTGMTVAGVVLL).

The protein belongs to the Bcl-2 family. In terms of assembly, homodimer. Interacts with BCL2L11. Interacts with BAD. Interacts with PGAM5. Interacts with HEBP2. Interacts with p53/TP53 and BBC3; interaction with BBC3 disrupts the interaction with p53/TP53. Interacts with ATP5F1A and ATP5F1B; the interactions mediate the association of isoform Bcl-X(L) with the mitochondrial membrane ATP synthase F(1)F(0) ATP synthase. Interacts with VDAC1. Interacts with BCL2L11 (via BH3). Interacts with RNF183. Interacts with GIMAP3/IAN4 and GIMAP5/IAN5. Interacts with GIMAP5 and HSPA8/HSC70; the interaction between HSPA8 and BCL2L1 is impaired in the absence of GIMAP5. Interacts with isoform 4 of CLU; this interaction releases and activates BAX and promotes cell death. As to quaternary structure, forms heterodimers with BAX, BAK or BCL2; heterodimerization with BAX does not seem to be required for anti-apoptotic activity. Interacts with isoform 1 of SIVA1; the interaction inhibits the anti-apoptotic activity. Interacts with IKZF3. Interacts with RTL10/BOP. Interacts with DNM1L and CLTA; DNM1L and BCL2L1 isoform BCL-X(L) may form a complex in synaptic vesicles that also contains clathrin and MFF. Interacts (via the loop between motifs BH4 and BH3) with NLRP1 (via LRR repeats), but not with NLRP2, NLRP3, NLRP4, PYCARD, nor MEFV. Interacts with BECN1. In terms of processing, proteolytically cleaved by caspases during apoptosis. The cleaved protein, lacking the BH4 motif, has pro-apoptotic activity. Post-translationally, phosphorylated on Ser-62 by CDK1. This phosphorylation is partial in normal mitotic cells, but complete in G2-arrested cells upon DNA-damage, thus promoting subsequent apoptosis probably by triggering caspases-mediated proteolysis. Phosphorylated by PLK3, leading to regulate the G2 checkpoint and progression to cytokinesis during mitosis. Phosphorylation at Ser-49 appears during the S phase and G2, disappears rapidly in early mitosis during prometaphase, metaphase and early anaphase, and re-appears during telophase and cytokinesis. Ubiquitinated by RNF183 during prolonged ER stress, leading to degradation by the proteosome. As to expression, expressed in most tissues. Bcl-X(beta) is specifically expressed in cerebellum, heart, and thymus. In the ovary, the predominant form is Bcl-X(L), with a small but detectable level of Bcl-X(S).

Its subcellular location is the mitochondrion inner membrane. It is found in the mitochondrion outer membrane. The protein resides in the mitochondrion matrix. It localises to the cytoplasmic vesicle. The protein localises to the secretory vesicle. Its subcellular location is the synaptic vesicle membrane. It is found in the cytoplasm. The protein resides in the cytosol. It localises to the cytoskeleton. The protein localises to the microtubule organizing center. Its subcellular location is the centrosome. It is found in the nucleus membrane. Its function is as follows. Potent inhibitor of cell death. Inhibits activation of caspases. Appears to regulate cell death by blocking the voltage-dependent anion channel (VDAC) by binding to it and preventing the release of the caspase activator, CYC1, from the mitochondrial membrane. Also acts as a regulator of G2 checkpoint and progression to cytokinesis during mitosis. Functionally, isoform Bcl-X(L) also regulates presynaptic plasticity, including neurotransmitter release and recovery, number of axonal mitochondria as well as size and number of synaptic vesicle clusters. During synaptic stimulation, increases ATP availability from mitochondria through regulation of mitochondrial membrane ATP synthase F(1)F(0) activity and regulates endocytic vesicle retrieval in hippocampal neurons through association with DMN1L and stimulation of its GTPase activity in synaptic vesicles. May attenuate inflammation impairing NLRP1-inflammasome activation, hence CASP1 activation and IL1B release. In terms of biological role, isoform Bcl-X(S) promotes apoptosis. This chain is Bcl-2-like protein 1 (Bcl2l1), found in Rattus norvegicus (Rat).